The primary structure comprises 239 residues: UPF0502 protein Bcen_5249 (239 aa).

A disordered region spans residues 196-239; the sequence is IRGAKGRTEAPRGRSGATQCAGSTDGERTRHRRRRTGRRVLIAS. Positions 224 to 233 are enriched in basic residues; sequence TRHRRRRTGR.

This sequence belongs to the UPF0502 family.

This Burkholderia orbicola (strain AU 1054) protein is UPF0502 protein Bcen_5249.